A 291-amino-acid chain; its full sequence is 4-hydroxy-tetrahydrodipicolinate synthase (291 aa).

Thr-45 is a binding site for pyruvate. Tyr-131 functions as the Proton donor/acceptor in the catalytic mechanism. Lys-159 acts as the Schiff-base intermediate with substrate in catalysis. Residue Ile-202 coordinates pyruvate.

Belongs to the DapA family. In terms of assembly, homotetramer; dimer of dimers.

Its subcellular location is the cytoplasm. It catalyses the reaction L-aspartate 4-semialdehyde + pyruvate = (2S,4S)-4-hydroxy-2,3,4,5-tetrahydrodipicolinate + H2O + H(+). It functions in the pathway amino-acid biosynthesis; L-lysine biosynthesis via DAP pathway; (S)-tetrahydrodipicolinate from L-aspartate: step 3/4. Catalyzes the condensation of (S)-aspartate-beta-semialdehyde [(S)-ASA] and pyruvate to 4-hydroxy-tetrahydrodipicolinate (HTPA). In Methanosarcina barkeri (strain Fusaro / DSM 804), this protein is 4-hydroxy-tetrahydrodipicolinate synthase.